Consider the following 234-residue polypeptide: Adenosine 5'-phosphosulfate reductase (234 aa).

Residues Cys120, Cys121, Cys203, and Cys206 each contribute to the [4Fe-4S] cluster site. The active-site Nucleophile; cysteine thiosulfonate intermediate is Cys229.

Belongs to the PAPS reductase family. CysH subfamily. [4Fe-4S] cluster is required as a cofactor.

It localises to the cytoplasm. It carries out the reaction [thioredoxin]-disulfide + sulfite + AMP + 2 H(+) = adenosine 5'-phosphosulfate + [thioredoxin]-dithiol. The protein operates within sulfur metabolism; hydrogen sulfide biosynthesis; sulfite from sulfate. In terms of biological role, catalyzes the formation of sulfite from adenosine 5'-phosphosulfate (APS) using thioredoxin as an electron donor. The protein is Adenosine 5'-phosphosulfate reductase of Bacillus cereus (strain Q1).